Consider the following 369-residue polypeptide: Glutamine synthetase 2 cytoplasmic (369 aa).

A GS beta-grasp domain is found at 32–112; sequence VQATYVWIDG…VMCDTYKFDG (81 aa). One can recognise a GS catalytic domain in the interval 119-369; that stretch reads KRKTCLEVAN…AILRTICLDE (251 aa).

This sequence belongs to the glutamine synthetase family. As to quaternary structure, homooctamer.

The protein localises to the cytoplasm. The catalysed reaction is L-glutamate + NH4(+) + ATP = L-glutamine + ADP + phosphate + H(+). The chain is Glutamine synthetase 2 cytoplasmic (Gs2) from Drosophila melanogaster (Fruit fly).